The following is a 343-amino-acid chain: Protein pelota homolog (343 aa).

Belongs to the eukaryotic release factor 1 family. Pelota subfamily. As to quaternary structure, monomer. A divalent metal cation serves as cofactor.

The protein resides in the cytoplasm. May function in recognizing stalled ribosomes, interact with stem-loop structures in stalled mRNA molecules, and effect endonucleolytic cleavage of the mRNA. May play a role in the release non-functional ribosomes and degradation of damaged mRNAs. Has endoribonuclease activity. The sequence is that of Protein pelota homolog from Cenarchaeum symbiosum (strain A).